The chain runs to 228 residues: Large ribosomal subunit protein bL25 (228 aa).

Positions 196–228 (EEAAVAEAQSAESAEGKAEAEAEATNEKNKSEA) are disordered. Residues 209 to 228 (AEGKAEAEAEATNEKNKSEA) are compositionally biased toward basic and acidic residues.

The protein belongs to the bacterial ribosomal protein bL25 family. CTC subfamily. In terms of assembly, part of the 50S ribosomal subunit; part of the 5S rRNA/L5/L18/L25 subcomplex. Contacts the 5S rRNA. Binds to the 5S rRNA independently of L5 and L18.

Functionally, this is one of the proteins that binds to the 5S RNA in the ribosome where it forms part of the central protuberance. The polypeptide is Large ribosomal subunit protein bL25 (Methylorubrum extorquens (strain CM4 / NCIMB 13688) (Methylobacterium extorquens)).